Consider the following 183-residue polypeptide: Dual-action ribosomal maturation protein DarP (183 aa).

Belongs to the DarP family.

It is found in the cytoplasm. Member of a network of 50S ribosomal subunit biogenesis factors which assembles along the 30S-50S interface, preventing incorrect 23S rRNA structures from forming. Promotes peptidyl transferase center (PTC) maturation. This is Dual-action ribosomal maturation protein DarP from Citrobacter koseri (strain ATCC BAA-895 / CDC 4225-83 / SGSC4696).